Reading from the N-terminus, the 462-residue chain is L-seryl-tRNA(Sec) selenium transferase (462 aa).

Lysine 292 carries the post-translational modification N6-(pyridoxal phosphate)lysine.

It belongs to the SelA family. It depends on pyridoxal 5'-phosphate as a cofactor.

It is found in the cytoplasm. The catalysed reaction is L-seryl-tRNA(Sec) + selenophosphate + H(+) = L-selenocysteinyl-tRNA(Sec) + phosphate. It participates in aminoacyl-tRNA biosynthesis; selenocysteinyl-tRNA(Sec) biosynthesis; selenocysteinyl-tRNA(Sec) from L-seryl-tRNA(Sec) (bacterial route): step 1/1. Converts seryl-tRNA(Sec) to selenocysteinyl-tRNA(Sec) required for selenoprotein biosynthesis. The protein is L-seryl-tRNA(Sec) selenium transferase of Clostridium perfringens (strain ATCC 13124 / DSM 756 / JCM 1290 / NCIMB 6125 / NCTC 8237 / Type A).